A 324-amino-acid chain; its full sequence is tRNA-dihydrouridine(20a/20b) synthase [NAD(P)+]-like (324 aa).

FMN is bound by residues 33–35 (PMV) and Gln-87. Residue Cys-116 is the Proton donor of the active site. FMN contacts are provided by residues Lys-158, His-186, 216–218 (NGD), and 240–241 (AR).

The protein belongs to the Dus family. Dus4 subfamily. The cofactor is FMN.

It catalyses the reaction 5,6-dihydrouridine(20a) in tRNA + NADP(+) = uridine(20a) in tRNA + NADPH + H(+). It carries out the reaction 5,6-dihydrouridine(20a) in tRNA + NAD(+) = uridine(20a) in tRNA + NADH + H(+). The enzyme catalyses 5,6-dihydrouridine(20b) in tRNA + NAD(+) = uridine(20b) in tRNA + NADH + H(+). The catalysed reaction is 5,6-dihydrouridine(20b) in tRNA + NADP(+) = uridine(20b) in tRNA + NADPH + H(+). In terms of biological role, catalyzes the synthesis of dihydrouridine, a modified base found in the D-loop of most tRNAs. In Mus musculus (Mouse), this protein is tRNA-dihydrouridine(20a/20b) synthase [NAD(P)+]-like (Dus4l).